Here is a 498-residue protein sequence, read N- to C-terminus: ADP,ATP carrier protein 1 (498 aa).

The Cytoplasmic portion of the chain corresponds to 1–33; the sequence is MSTTKSDNYISELRKVIWPIERYENKKFLPMAF. A helical membrane pass occupies residues 34–54; that stretch reads MMFCILLNYSTLRSIKDGFVV. Cys-37 and Cys-85 form a disulfide bridge. At 55-67 the chain is on the extracellular side; that stretch reads TDIGAEAISFLKT. Residues 68 to 88 traverse the membrane as a helical segment; that stretch reads YIVLPSAVIAMIVYVKLCDIL. At 89–92 the chain is on the cytoplasmic side; sequence KQEN. The helical transmembrane segment at 93-113 threads the bilayer; that stretch reads VFYVITSFFLAYFALFAFVLY. Residues 114–147 lie on the Extracellular side of the membrane; sequence PNPDLVHPNPEAIESLSLAYPNFKWFIRIVGKWS. The chain crosses the membrane as a helical span at residues 148 to 168; it reads FASFYTMAELWGTLMLSLLFW. The Cytoplasmic segment spans residues 169 to 184; the sequence is QFANQITKTDEAKRFY. Residues 185–205 form a helical membrane-spanning segment; sequence SMFGLLANLALPVTSLIIGYF. Topologically, residues 206-218 are extracellular; that stretch reads LHEKTQIVAEHLK. Residues 219–239 traverse the membrane as a helical segment; that stretch reads FTPLFVIMIISSLAVILTYRW. Topologically, residues 240 to 279 are cytoplasmic; the sequence is MNKNVLTDPKLYDPALVKGKKAKAKMSLIESFKMIFTSKY. Residues 280–300 traverse the membrane as a helical segment; that stretch reads VGYIALLLIAYGISVNLVEGV. The Extracellular segment spans residues 301 to 320; that stretch reads WKSKLKELHPTKEAYTMYMG. A helical membrane pass occupies residues 321-341; it reads QFQAYQGWVAIAFMIIGSNIL. The Cytoplasmic portion of the chain corresponds to 342-348; that stretch reads RKVSWLT. Residues 349 to 369 traverse the membrane as a helical segment; that stretch reads AAMITPLMMLITGIAFFAFIF. Residues 370 to 379 are Extracellular-facing; it reads FDSVIAMYLT. A helical membrane pass occupies residues 380 to 400; that stretch reads GILASGPLALAVMIGTIQNVL. The Cytoplasmic segment spans residues 401–438; it reads SKGVKYSLFDATKNMAYIPLDKDLRVKGQAAVEVIGGR. 436 to 442 is a binding site for ATP; that stretch reads GGRFGKS. The helical transmembrane segment at 439–459 threads the bilayer; that stretch reads FGKSGGAIIQSTFFIIFPALG. Residues 460–465 lie on the Extracellular side of the membrane; that stretch reads FVEATP. A helical membrane pass occupies residues 466–486; it reads YFASIFFVIVILWIYAVKGLN. Residues 487-498 lie on the Cytoplasmic side of the membrane; the sequence is KEYQVLVNNTEK.

Belongs to the ADP/ATP translocase tlc family.

The protein localises to the cell membrane. Its function is as follows. Provides the rickettsial cell with host ATP in exchange for rickettsial ADP. This is an obligate exchange system. This energy acquiring activity is an important component of rickettsial parasitism. The sequence is that of ADP,ATP carrier protein 1 (tlcA) from Rickettsia bellii (strain RML369-C).